The sequence spans 124 residues: MSEIRDDRQYTQTHEWILDHGDGTYTMGITDHAQALLGDMVFVELPNIDDEVSIEDEFCVVESVKAASGVYAPADLQIIKVNKALDDEPELINYSCYDDGWLVKFKSHSVDDLMNVAVYAQILD.

Positions 24 to 106 (TYTMGITDHA…YDDGWLVKFK (83 aa)) constitute a Lipoyl-binding domain. K65 carries the N6-lipoyllysine modification.

It belongs to the GcvH family. As to quaternary structure, the glycine cleavage system is composed of four proteins: P, T, L and H. (R)-lipoate serves as cofactor.

In terms of biological role, the glycine cleavage system catalyzes the degradation of glycine. The H protein shuttles the methylamine group of glycine from the P protein to the T protein. In Ruthia magnifica subsp. Calyptogena magnifica, this protein is Glycine cleavage system H protein.